We begin with the raw amino-acid sequence, 107 residues long: Small leucine-rich protein 1 (107 aa).

2 helical membrane-spanning segments follow: residues 19-39 (AALV…LAMS) and 53-73 (FLFF…IAYF). The interval 85–107 (SQNCDRQHNPKDGSSLYQRMKWT) is disordered.

The protein localises to the membrane. In Homo sapiens (Human), this protein is Small leucine-rich protein 1 (SMLR1).